The following is a 279-amino-acid chain: Small ribosomal subunit protein uS2 (279 aa).

This sequence belongs to the universal ribosomal protein uS2 family. In terms of assembly, component of the small ribosomal subunit. Mature ribosomes consist of a small (40S) and a large (60S) subunit. The 40S subunit contains about 33 different proteins and 1 molecule of RNA (18S). The 60S subunit contains about 49 different proteins and 3 molecules of RNA (28S, 5.8S and 5S). Interacts with ribosomal protein S21.

It localises to the cytoplasm. In terms of biological role, required for the assembly and/or stability of the 40S ribosomal subunit. Required for the processing of the 20S rRNA-precursor to mature 18S rRNA in a late step of the maturation of 40S ribosomal subunits. The sequence is that of Small ribosomal subunit protein uS2 from Schistosoma japonicum (Blood fluke).